Consider the following 153-residue polypeptide: 6,7-dimethyl-8-ribityllumazine synthase 1 (153 aa).

5-amino-6-(D-ribitylamino)uracil-binding positions include phenylalanine 16, 47–49, and 76–78; these read ALE and MVI. 81–82 is a (2S)-2-hydroxy-3-oxobutyl phosphate binding site; sequence ET. Histidine 84 (proton donor) is an active-site residue. Residue asparagine 109 coordinates 5-amino-6-(D-ribitylamino)uracil. Arginine 123 lines the (2S)-2-hydroxy-3-oxobutyl phosphate pocket.

Belongs to the DMRL synthase family.

The enzyme catalyses (2S)-2-hydroxy-3-oxobutyl phosphate + 5-amino-6-(D-ribitylamino)uracil = 6,7-dimethyl-8-(1-D-ribityl)lumazine + phosphate + 2 H2O + H(+). The protein operates within cofactor biosynthesis; riboflavin biosynthesis; riboflavin from 2-hydroxy-3-oxobutyl phosphate and 5-amino-6-(D-ribitylamino)uracil: step 1/2. In terms of biological role, catalyzes the formation of 6,7-dimethyl-8-ribityllumazine by condensation of 5-amino-6-(D-ribitylamino)uracil with 3,4-dihydroxy-2-butanone 4-phosphate. This is the penultimate step in the biosynthesis of riboflavin. In Rhizobium meliloti (strain 1021) (Ensifer meliloti), this protein is 6,7-dimethyl-8-ribityllumazine synthase 1.